The primary structure comprises 555 residues: Potassium-transporting ATPase potassium-binding subunit (555 aa).

The next 10 helical transmembrane spans lie at 2–22, 60–80, 130–150, 173–193, 246–266, 278–298, 374–394, 412–432, 483–503, and 525–545; these read IWVA…PTGI, QYAL…YFVF, IGIT…VMAF, VFLP…VPQT, MSNI…PFTY, ILFV…TTSE, AGFV…GLMV, LIAV…ALAL, LVMF…AASL, and GIFI…MLVL.

This sequence belongs to the KdpA family. In terms of assembly, the system is composed of three essential subunits: KdpA, KdpB and KdpC.

The protein resides in the cell membrane. Part of the high-affinity ATP-driven potassium transport (or Kdp) system, which catalyzes the hydrolysis of ATP coupled with the electrogenic transport of potassium into the cytoplasm. This subunit binds the extracellular potassium ions and delivers the ions to the membrane domain of KdpB through an intramembrane tunnel. The polypeptide is Potassium-transporting ATPase potassium-binding subunit (Bacillus cereus (strain ATCC 10987 / NRS 248)).